A 581-amino-acid chain; its full sequence is Netrin-3 (581 aa).

Positions 1–15 (LRLLLTTSVLRLARA) are cleaved as a signal peptide. The Laminin N-terminal domain occupies 35–261 (APRRCIPEFV…SVGELQVGGR (227 aa)). Residues N88 and N103 are each glycosylated (N-linked (GlcNAc...) asparagine). Cystine bridges form between C91–C124, C262–C271, C264–C281, C283–C292, C295–C315, C318–C327, C320–C345, C348–C357, C360–C378, C381–C393, C383–C400, C402–C411, C414–C428, C449–C521, and C468–C578. Laminin EGF-like domains follow at residues 262–317 (CKCN…ECLA), 318–380 (CNCN…ACKA), and 381–430 (CDCH…PCIK). N394 is a glycosylation site (N-linked (GlcNAc...) asparagine). Positions 449 to 578 (CDSYCKPAKG…LQRREKKGKC (130 aa)) constitute an NTR domain. Positions 507-509 (RGD) match the Cell attachment site motif. N-linked (GlcNAc...) asparagine glycosylation is present at N540.

It localises to the secreted. The protein resides in the extracellular space. Its subcellular location is the extracellular matrix. Netrins control guidance of CNS commissural axons and peripheral motor axons. The protein is Netrin-3 (NTN3) of Gallus gallus (Chicken).